Consider the following 810-residue polypeptide: Chloride channel protein (810 aa).

Over 2–48 the chain is Cytoplasmic; the sequence is SHEKNEASGNPEAQSWKAQEAMLGVKTEVSRWRAVKNCLYRHLVKVL. Transmembrane regions (helical) follow at residues 49–86 and 93–116; these read GEDW…LFAM and LQYL…CQIV. The Selectivity filter part_1 signature appears at 122–126; the sequence is GSGIP. S123 provides a ligand contact to chloride. Residues 125-132 constitute an intramembrane region (helical); it reads IPELKTII. 2 helical membrane-spanning segments follow: residues 141–160 and 166–184; these read LTLR…LSAG and EGPF…NQLL. The Selectivity filter part_2 motif lies at 164–168; it reads GKEGP. Intramembrane regions (helical) lie at residues 201–213 and 217–225; these read ILTV…ISCC and PLAGVLFSI. Helical transmembrane passes span 237–254, 283–311, and 320–339; these read YWRG…FRVL, LPAF…IVFM, and ILKK…LATL. N365 is a glycosylation site (N-linked (GlcNAc...) asparagine). 2 consecutive transmembrane segments (helical) span residues 389 to 408 and 416 to 439; these read NIFI…AALA and GAFV…MALL. A Selectivity filter part_3 motif is present at residues 416–420; it reads GAFVP. F418 provides a ligand contact to chloride. An intramembrane region (helical) is located at residues 456–470; that stretch reads GEYAVIGAAAMTGAV. Residues 471 to 472 constitute an intramembrane region (note=Loop between two helices); the sequence is TH. Residues 473–484 constitute an intramembrane region (helical); the sequence is AVSTAVICFELT. An intramembrane region (note=Loop between two helices) is located at residues 485–489; that stretch reads GQISH. A helical transmembrane segment spans residues 490 to 506; that stretch reads VLPMMVAVILANMVAQG. At 507 to 810 the chain is on the cytoplasmic side; sequence LQPSLYDSII…RTATSNSSGK (304 aa). Y512 contributes to the chloride binding site. Residues 543–601 form the CBS 1 domain; it reads MVRDVTSIASTSTYGDLLHVLRQTKLKFFPFVDTPETNTLLGSIERTEVEGLLQRRISA. Disordered stretches follow at residues 604–631 and 658–688; these read RQPA…DVPG and KVQT…KHKG. Residues 724 to 781 enclose the CBS 2 domain; sequence IDQSPFQLVEGTSLQKTHTLFSLLGLDRAYVTSMGKLVGVVALAEIQAAIEGSYQKGF.

It belongs to the chloride channel (TC 2.A.49) family. ClC-0 subfamily. In terms of assembly, homodimer. Each subunit has channel activity ('Double barreled channel').

It localises to the membrane. Voltage-gated chloride channel. This channel is thought to ensure the high conductance of the non-innervated membrane of the electrocyte necessary for efficient current generation caused by sodium influx through the acetylcholine receptor at the innervated membrane. This is Chloride channel protein from Tetronarce californica (Pacific electric ray).